Here is a 255-residue protein sequence, read N- to C-terminus: tRNA pseudouridine synthase B (255 aa).

The active-site Nucleophile is aspartate 58.

It belongs to the pseudouridine synthase TruB family. Type 1 subfamily.

It catalyses the reaction uridine(55) in tRNA = pseudouridine(55) in tRNA. Functionally, responsible for synthesis of pseudouridine from uracil-55 in the psi GC loop of transfer RNAs. This Chlorobium chlorochromatii (strain CaD3) protein is tRNA pseudouridine synthase B.